Reading from the N-terminus, the 724-residue chain is Cyclin-T1 (724 aa).

Residue S117 is modified to Phosphoserine. The Nuclear localization signal signature appears at 253 to 270; that stretch reads KRIRNWRAYQAAMKTKPD. K342 participates in a covalent cross-link: Glycyl lysine isopeptide (Lys-Gly) (interchain with G-Cter in SUMO2). Residues 384–425 are a coiled coil; it reads SAKVSLKEYRAKHAEELAAQKRQLENMEANVKSQYAYAAQNL. At S388 the chain carries Phosphoserine. The residue at position 390 (K390) is an N6-acetyllysine. K415 is covalently cross-linked (Glycyl lysine isopeptide (Lys-Gly) (interchain with G-Cter in SUMO2)). ADP-ribosylserine occurs at positions 416, 473, and 474. Positions 479 to 549 are histidine-rich domain (HRD); the sequence is IKMRIKVHSA…RPSDPKHSSQ (71 aa). K480 is covalently cross-linked (Glycyl lysine isopeptide (Lys-Gly) (interchain with G-Cter in SUMO2)). The segment covering 483 to 507 has biased composition (basic and acidic residues); the sequence is IKVHSAGDKHNSIEDSVTKSREHKE. Disordered regions lie at residues 483–586 and 691–724; these read IKVH…VFDH and PRAGAISSRSGTTDKPRPPPLPSEPPPPLPPLPK. K484 bears the N6-(ADP-ribosyl)lysine mark. Residue H486 is modified to ADP-ribosylhistidine. Residues S494 and S498 each carry the phosphoserine modification. The segment covering 508-529 has biased composition (basic residues); that stretch reads KQRTHPSNHHHHHNHHSHRHSH. An ADP-ribosylhistidine modification is found at H529. An ADP-ribosylserine mark is found at S548 and S551. H555 carries the post-translational modification ADP-ribosylhistidine. The span at 559 to 569 shows a compositional bias: low complexity; the sequence is SLSSTLSSSSS. The residue at position 562 (S562) is an ADP-ribosylserine. A compositionally biased stretch (pro residues) spans 708 to 724; the sequence is PPPLPSEPPPPLPPLPK.

This sequence belongs to the cyclin family. Cyclin C subfamily. As to quaternary structure, cyclin-T1 is the predominant cyclin that associates with CDK9 to form a heterodimer called P-TEFb. P-TEFb forms a complex with AFF4/AF5Q31. Component of a complex which is at least composed of HTATSF1/Tat-SF1, P-TEFb complex, RNA pol II, SUPT5H, and NCL/nucleolin. Component of the 7SK snRNP complex at least composed of P-TEFb (composed of CDK9 and CCNT1/cyclin-T1), HEXIM1, HEXIM2, BCDIN3, SART3 proteins and 7SK and U6 snRNAs. Interacts (via central region) with ZMYND8 (via N-terminus); the interaction is direct and the association appears to occur between homodimeric ZMYND8 and the activated form of the P-TEFb complex. Interacts with BRD4, targets chromatin binding. Interacts with JMJD6. Interacts with MDFIC. Interacts with HSF1. Interacts with HTATSF1. Interacts with TBX21. ADP-ribosylation on serine residues by PARP1 in response to DNA damage disrupts the phase separation activity of CCNT1, thereby preventing activation of CDK9.

It localises to the nucleus. In terms of biological role, regulatory subunit of the cyclin-dependent kinase pair (CDK9/cyclin-T1) complex, also called positive transcription elongation factor B (P-TEFb), which facilitates the transition from abortive to productive elongation by phosphorylating the CTD (C-terminal domain) of the large subunit of RNA polymerase II (RNA Pol II). Required to activate the protein kinase activity of CDK9: acts by mediating formation of liquid-liquid phase separation (LLPS) that enhances binding of P-TEFb to the CTD of RNA Pol II. The chain is Cyclin-T1 (Ccnt1) from Mus musculus (Mouse).